The primary structure comprises 470 residues: Ribulose bisphosphate carboxylase large chain (470 aa).

Positions 118 and 168 each coordinate substrate. The active-site Proton acceptor is lysine 170. Lysine 172 provides a ligand contact to substrate. 3 residues coordinate Mg(2+): lysine 196, aspartate 198, and glutamate 199. At lysine 196 the chain carries N6-carboxylysine. Histidine 289 (proton acceptor) is an active-site residue. 3 residues coordinate substrate: arginine 290, histidine 322, and serine 374.

This sequence belongs to the RuBisCO large chain family. Type I subfamily. Heterohexadecamer of 8 large chains and 8 small chains; disulfide-linked. The disulfide link is formed within the large subunit homodimers. RuBisCO interacts with the C-terminus of CcmM, and can be found in complexes that also include carbonic anhydrase (ccaA). RuBisCO associates with both the internal and shell portion of carboxysomes. Mg(2+) serves as cofactor. The disulfide bond which can form in the large chain dimeric partners within the hexadecamer appears to be associated with oxidative stress and protein turnover.

It is found in the carboxysome. The catalysed reaction is 2 (2R)-3-phosphoglycerate + 2 H(+) = D-ribulose 1,5-bisphosphate + CO2 + H2O. It carries out the reaction D-ribulose 1,5-bisphosphate + O2 = 2-phosphoglycolate + (2R)-3-phosphoglycerate + 2 H(+). Its function is as follows. RuBisCO catalyzes two reactions: the carboxylation of D-ribulose 1,5-bisphosphate, the primary event in carbon dioxide fixation, as well as the oxidative fragmentation of the pentose substrate in the photorespiration process. Both reactions occur simultaneously and in competition at the same active site. This Synechocystis sp. (strain ATCC 27184 / PCC 6803 / Kazusa) protein is Ribulose bisphosphate carboxylase large chain.